The sequence spans 96 residues: uncharacterized protein (96 aa).

A signal peptide spans M1 to A21.

This is an uncharacterized protein from Archaeoglobus fulgidus (strain ATCC 49558 / DSM 4304 / JCM 9628 / NBRC 100126 / VC-16).